Reading from the N-terminus, the 260-residue chain is Pyridoxine 5'-phosphate synthase (260 aa).

Position 6 (asparagine 6) interacts with 3-amino-2-oxopropyl phosphate. A 1-deoxy-D-xylulose 5-phosphate-binding site is contributed by 8-9 (DH). Arginine 17 contributes to the 3-amino-2-oxopropyl phosphate binding site. Catalysis depends on histidine 42, which acts as the Proton acceptor. Positions 44 and 49 each coordinate 1-deoxy-D-xylulose 5-phosphate. The active-site Proton acceptor is glutamate 69. Residue threonine 99 coordinates 1-deoxy-D-xylulose 5-phosphate. Histidine 213 (proton donor) is an active-site residue. Residues glycine 214 and 235–236 (GQ) contribute to the 3-amino-2-oxopropyl phosphate site.

Belongs to the PNP synthase family. As to quaternary structure, homooctamer; tetramer of dimers.

Its subcellular location is the cytoplasm. It catalyses the reaction 3-amino-2-oxopropyl phosphate + 1-deoxy-D-xylulose 5-phosphate = pyridoxine 5'-phosphate + phosphate + 2 H2O + H(+). It participates in cofactor biosynthesis; pyridoxine 5'-phosphate biosynthesis; pyridoxine 5'-phosphate from D-erythrose 4-phosphate: step 5/5. Its function is as follows. Catalyzes the complicated ring closure reaction between the two acyclic compounds 1-deoxy-D-xylulose-5-phosphate (DXP) and 3-amino-2-oxopropyl phosphate (1-amino-acetone-3-phosphate or AAP) to form pyridoxine 5'-phosphate (PNP) and inorganic phosphate. The sequence is that of Pyridoxine 5'-phosphate synthase from Sulfurimonas denitrificans (strain ATCC 33889 / DSM 1251) (Thiomicrospira denitrificans (strain ATCC 33889 / DSM 1251)).